The following is a 694-amino-acid chain: MVKLAKTPKNQMKQKKMAPPPKKVEESEEEESSDLEESSGEEVMVPPKKQQKAAVTPAKKAATPAKKAATPAKKAVTPAKKAVATPAKKAVAPSPKKAAVVGKGAKNGKNAKKEESEEEDEDDEDDEEDEDEEEESDEEEEPAVPVKPAAKKSAAAVPAKKPAVVPAKQESEEEEEEDDEEEDEEDDESEDEAMDTTPAPVKKPTPAKATPAKAKAESEDEEDEEDEDEDEEDEDDEEEDEEESEDEKPVKEAPGKRKKEMANKSAPEAKKKKTETPASAFSLFVKNLTPTKDYEELRTAIKEFFGKKNLQVSEVRIGSSKRFGYVDFLSAEDMDKALQLNGKKLMGLEIKLEKAKSKESLKENKKERDARTLFVKNLPYRVTEDEMKNVFENALEVRLVLNKEGSSKGMAYIEFKTEAEAEKALEEKQGTEVDGRAMVIDYTGEKSQQESQKGGGERESKTLIVNNLSYAASEETLQELFKKATSIKMPQNNQGRPKGYAFVEFPTAEDAKEALNSCNNTEIEGRAIRLEFSSPSWQKGNMNARGGFNQQSKTLFVRGLSEDTTEETLRESFEGSISARIVTDRDTGSSKGFGFVDFSSPEDAKAAKEAMEDGEIDGNKVTLDFAKPKGEFQRGGGFGGGFGGRGGRGGRGGGRGGFGGRGGGRGFGGRGGGFRGGRGGGGDHKPQGKKIKFE.

The segment at 1-277 (MVKLAKTPKN…EAKKKKTETP (277 aa)) is disordered. A compositionally biased stretch (acidic residues) spans 26–40 (ESEEEESSDLEESSG). Low complexity predominate over residues 46–108 (PPKKQQKAAV…AVVGKGAKNG (63 aa)). 5 consecutive repeat copies span residues 55 to 61 (VTPAKKA), 62 to 68 (ATPAKKA), 69 to 75 (ATPAKKA), 76 to 82 (VTPAKKA), and 84 to 90 (ATPAKKA). The 5 X 7 AA tandem repeats of X-T-P-X-K-K-X stretch occupies residues 55–90 (VTPAKKAATPAKKAATPAKKAVTPAKKAVATPAKKA). Serine 116 and serine 136 each carry phosphoserine. Positions 116–142 (SEEEDEDDEDDEEDEDEEEESDEEEEP) are enriched in acidic residues. Residues 143 to 168 (AVPVKPAAKKSAAAVPAKKPAVVPAK) show a composition bias toward low complexity. Serine 171 carries the phosphoserine modification. Positions 171 to 194 (SEEEEEEDDEEEDEEDDESEDEAM) are enriched in acidic residues. Over residues 196-213 (TTPAPVKKPTPAKATPAK) the composition is skewed to low complexity. Over residues 218-246 (SEDEEDEEDEDEDEEDEDDEEEDEEESED) the composition is skewed to acidic residues. RRM domains lie at 281–357 (FSLF…KAKS), 371–445 (RTLF…YTGE), 461–535 (KTLI…FSSP), and 553–628 (KTLF…FAKP). Residues 631 to 694 (EFQRGGGFGG…KPQGKKIKFE (64 aa)) form a disordered region. The span at 633 to 680 (QRGGGFGGGFGGRGGRGGRGGGRGGFGGRGGGRGFGGRGGGFRGGRGG) shows a compositional bias: gly residues. Positions 681–694 (GGDHKPQGKKIKFE) are enriched in basic and acidic residues.

In terms of processing, highly phosphorylated during mitosis.

The protein localises to the nucleus. Its subcellular location is the nucleolus. Its function is as follows. Nucleolin is the major nucleolar protein of growing eukaryotic cells. It is found associated with intranucleolar chromatin and pre-ribosomal particles. It induces chromatin decondensation by binding to histone H1. It is thought to play a role in pre-rRNA transcription and ribosome assembly. The polypeptide is Nucleolin (NCL) (Gallus gallus (Chicken)).